The following is a 269-amino-acid chain: Senescence-associated protein 13 (269 aa).

21-45 (LVTGGSKGIGEAVVEELAMLGAKVH) provides a ligand contact to NADP(+). Residue Ser154 coordinates substrate. The Proton acceptor role is filled by Tyr167.

This sequence belongs to the short-chain dehydrogenases/reductases (SDR) family. SDR65C subfamily.

Its function is as follows. Unspecific reductase providing both diastereomeric alcohols from the prochiral ketones. Active on cyclic monoterpenes and small flexible lipophilic carbonyls. No activity with tropinone, nitrogen-containing tropinone analogs, tropine or pseudotropine as substrate. The sequence is that of Senescence-associated protein 13 from Arabidopsis thaliana (Mouse-ear cress).